A 204-amino-acid polypeptide reads, in one-letter code: Leucyl/phenylalanyl-tRNA--protein transferase (204 aa).

It belongs to the L/F-transferase family.

The protein localises to the cytoplasm. The catalysed reaction is N-terminal L-lysyl-[protein] + L-leucyl-tRNA(Leu) = N-terminal L-leucyl-L-lysyl-[protein] + tRNA(Leu) + H(+). It catalyses the reaction N-terminal L-arginyl-[protein] + L-leucyl-tRNA(Leu) = N-terminal L-leucyl-L-arginyl-[protein] + tRNA(Leu) + H(+). The enzyme catalyses L-phenylalanyl-tRNA(Phe) + an N-terminal L-alpha-aminoacyl-[protein] = an N-terminal L-phenylalanyl-L-alpha-aminoacyl-[protein] + tRNA(Phe). Functions in the N-end rule pathway of protein degradation where it conjugates Leu, Phe and, less efficiently, Met from aminoacyl-tRNAs to the N-termini of proteins containing an N-terminal arginine or lysine. This Agrobacterium fabrum (strain C58 / ATCC 33970) (Agrobacterium tumefaciens (strain C58)) protein is Leucyl/phenylalanyl-tRNA--protein transferase.